A 292-amino-acid polypeptide reads, in one-letter code: MFDDQDEIHPLLAGAPQTTEFRKLRKRIVREVREAIETYGMVERGARWLVCLSGGKDSYTLLAVLHELKWRGLLPVDLLACNLDQGQPGFPATVLPEFLSRMGVPHRIEYQDTYSIVMDKIPQGRTYCALCSRLRRGNLYRIAREEGCSAVVLGHHRDDILETFFMNLFHGGRLATMPPKLVNEDGDLFVYRPLAFVAEADCEKFARDMAYPIIPCDLCGSQEGLQRQQVKQILDGWEARSPGRRQVMFRALMNARPSHLLDPGLFDFLGLATAPRAAEERQDEPPHLRGEA.

Positions 53–58 (SGGKDS) match the PP-loop motif motif. Residues Cys-128, Cys-131, and Cys-219 each contribute to the [4Fe-4S] cluster site.

The protein belongs to the TtcA family. In terms of assembly, homodimer. It depends on Mg(2+) as a cofactor. [4Fe-4S] cluster is required as a cofactor.

The protein resides in the cytoplasm. It carries out the reaction cytidine(32) in tRNA + S-sulfanyl-L-cysteinyl-[cysteine desulfurase] + AH2 + ATP = 2-thiocytidine(32) in tRNA + L-cysteinyl-[cysteine desulfurase] + A + AMP + diphosphate + H(+). Its pathway is tRNA modification. Its function is as follows. Catalyzes the ATP-dependent 2-thiolation of cytidine in position 32 of tRNA, to form 2-thiocytidine (s(2)C32). The sulfur atoms are provided by the cysteine/cysteine desulfurase (IscS) system. In Cereibacter sphaeroides (strain ATCC 17029 / ATH 2.4.9) (Rhodobacter sphaeroides), this protein is tRNA-cytidine(32) 2-sulfurtransferase.